We begin with the raw amino-acid sequence, 88 residues long: Small ribosomal subunit protein bS16 (88 aa).

The protein belongs to the bacterial ribosomal protein bS16 family.

In Syntrophomonas wolfei subsp. wolfei (strain DSM 2245B / Goettingen), this protein is Small ribosomal subunit protein bS16.